The sequence spans 252 residues: Ribosome maturation factor RimP (252 aa).

The disordered stretch occupies residues 188-252 (QGAAPGTEGG…PAAGPGAQDE (65 aa)). Positions 208 to 224 (ARRPHQPKPKKAKKKGP) are enriched in basic residues.

This sequence belongs to the RimP family.

The protein resides in the cytoplasm. In terms of biological role, required for maturation of 30S ribosomal subunits. This chain is Ribosome maturation factor RimP, found in Rhodospirillum centenum (strain ATCC 51521 / SW).